Here is a 570-residue protein sequence, read N- to C-terminus: Sulfite reductase [NADPH] hemoprotein beta-component (570 aa).

Residues cysteine 433, cysteine 439, cysteine 478, and cysteine 482 each coordinate [4Fe-4S] cluster. Cysteine 482 is a binding site for siroheme.

It belongs to the nitrite and sulfite reductase 4Fe-4S domain family. As to quaternary structure, alpha(8)-beta(8). The alpha component is a flavoprotein, the beta component is a hemoprotein. Siroheme serves as cofactor. The cofactor is [4Fe-4S] cluster.

It carries out the reaction hydrogen sulfide + 3 NADP(+) + 3 H2O = sulfite + 3 NADPH + 4 H(+). It participates in sulfur metabolism; hydrogen sulfide biosynthesis; hydrogen sulfide from sulfite (NADPH route): step 1/1. In terms of biological role, component of the sulfite reductase complex that catalyzes the 6-electron reduction of sulfite to sulfide. This is one of several activities required for the biosynthesis of L-cysteine from sulfate. The sequence is that of Sulfite reductase [NADPH] hemoprotein beta-component from Aeromonas hydrophila subsp. hydrophila (strain ATCC 7966 / DSM 30187 / BCRC 13018 / CCUG 14551 / JCM 1027 / KCTC 2358 / NCIMB 9240 / NCTC 8049).